A 591-amino-acid chain; its full sequence is 2-succinyl-5-enolpyruvyl-6-hydroxy-3-cyclohexene-1-carboxylate synthase (591 aa).

This sequence belongs to the TPP enzyme family. MenD subfamily. As to quaternary structure, homodimer. Mg(2+) serves as cofactor. Requires Mn(2+) as cofactor. The cofactor is thiamine diphosphate.

The catalysed reaction is isochorismate + 2-oxoglutarate + H(+) = 5-enolpyruvoyl-6-hydroxy-2-succinyl-cyclohex-3-ene-1-carboxylate + CO2. It participates in quinol/quinone metabolism; 1,4-dihydroxy-2-naphthoate biosynthesis; 1,4-dihydroxy-2-naphthoate from chorismate: step 2/7. The protein operates within quinol/quinone metabolism; menaquinone biosynthesis. Its function is as follows. Catalyzes the thiamine diphosphate-dependent decarboxylation of 2-oxoglutarate and the subsequent addition of the resulting succinic semialdehyde-thiamine pyrophosphate anion to isochorismate to yield 2-succinyl-5-enolpyruvyl-6-hydroxy-3-cyclohexene-1-carboxylate (SEPHCHC). This is 2-succinyl-5-enolpyruvyl-6-hydroxy-3-cyclohexene-1-carboxylate synthase from Salinibacter ruber (strain DSM 13855 / M31).